The following is a 240-amino-acid chain: Ribonuclease 3 (240 aa).

The RNase III domain maps to 9–141; the sequence is VEEFQKKTGI…LLAAIYLDQG (133 aa). Mg(2+) is bound at residue Glu-54. Asp-58 is a catalytic residue. Residues Asp-127 and Glu-130 each coordinate Mg(2+). The active site involves Glu-130. In terms of domain architecture, DRBM spans 168–237; the sequence is DYKTALQEIV…ARIAYEKLLK (70 aa).

Belongs to the ribonuclease III family. In terms of assembly, homodimer. Mg(2+) is required as a cofactor.

Its subcellular location is the cytoplasm. The catalysed reaction is Endonucleolytic cleavage to 5'-phosphomonoester.. In terms of biological role, digests double-stranded RNA. Involved in the processing of primary rRNA transcript to yield the immediate precursors to the large and small rRNAs (23S and 16S). Processes some mRNAs, and tRNAs when they are encoded in the rRNA operon. Processes pre-crRNA and tracrRNA of type II CRISPR loci if present in the organism. The polypeptide is Ribonuclease 3 (Thermotoga petrophila (strain ATCC BAA-488 / DSM 13995 / JCM 10881 / RKU-1)).